Reading from the N-terminus, the 313-residue chain is MQNMFSFLSNKKIIALFLIIGTIFMPLSSEAYPIFAQQNYASPREATGRIVCANCHLAKKPVDIEVPQAVLPDTVFEAVVKIPYDTQVQQVLGNGKKGPLNVGAVLILPEGFKLAPQDRIPEEMKSKISNLYFQPYNAANENILVIGPIPGDKNREIVFPILSPDPAKDKGTYFIKYPISVGANRGRGQVYPDGSKSNNTVYNASVSGTITDIIKEKKAYKISIETKDGTVVDTVPVGPELIVAKGDTVVTGQPITDNPNVGGFGQMDTEVVLQNPVRIKWLIAFLILSTLGQVFLVLKKKQFERVQIAESNF.

The N-terminal stretch at methionine 1 to alanine 31 is a signal peptide. 4 residues coordinate heme: tyrosine 32, cysteine 52, cysteine 55, and histidine 56. A helical transmembrane segment spans residues isoleucine 279–leucine 298.

It belongs to the cytochrome f family. As to quaternary structure, the 4 large subunits of the cytochrome b6-f complex are cytochrome b6, subunit IV (17 kDa polypeptide, petD), cytochrome f and the Rieske protein, while the 4 small subunits are PetG, PetL, PetM and PetN. The complex functions as a dimer. It depends on heme as a cofactor.

The protein resides in the plastid. It is found in the chloroplast thylakoid membrane. Its function is as follows. Component of the cytochrome b6-f complex, which mediates electron transfer between photosystem II (PSII) and photosystem I (PSI), cyclic electron flow around PSI, and state transitions. The chain is Cytochrome f (petA) from Mesostigma viride (Green alga).